The sequence spans 441 residues: 3-phosphoshikimate 1-carboxyvinyltransferase (441 aa).

The interval M1–K24 is disordered. Residues K29, S30, and R34 each contribute to the 3-phosphoshikimate site. A phosphoenolpyruvate-binding site is contributed by K29. Residues G103 and R132 each coordinate phosphoenolpyruvate. 3-phosphoshikimate-binding residues include S177, Q179, D328, and K355. Q179 serves as a coordination point for phosphoenolpyruvate. Catalysis depends on D328, which acts as the Proton acceptor. Phosphoenolpyruvate-binding residues include R359 and R401.

It belongs to the EPSP synthase family. In terms of assembly, monomer.

The protein localises to the cytoplasm. The enzyme catalyses 3-phosphoshikimate + phosphoenolpyruvate = 5-O-(1-carboxyvinyl)-3-phosphoshikimate + phosphate. The protein operates within metabolic intermediate biosynthesis; chorismate biosynthesis; chorismate from D-erythrose 4-phosphate and phosphoenolpyruvate: step 6/7. Its function is as follows. Catalyzes the transfer of the enolpyruvyl moiety of phosphoenolpyruvate (PEP) to the 5-hydroxyl of shikimate-3-phosphate (S3P) to produce enolpyruvyl shikimate-3-phosphate and inorganic phosphate. This Synechococcus sp. (strain CC9605) protein is 3-phosphoshikimate 1-carboxyvinyltransferase.